We begin with the raw amino-acid sequence, 166 residues long: Phospholipase A2 inhibitor B1 (166 aa).

An N-terminal signal peptide occupies residues 1-19 (MRLILLSGLLLLGTFLVNG). The C-type lectin domain maps to 46–161 (LFHAFLTVHK…CDDNLLVVCE (116 aa)). Cystine bridges form between Cys-83/Cys-160 and Cys-138/Cys-152. Residue Asn-122 is glycosylated (N-linked (GlcNAc...) asparagine).

The protein belongs to the alpha-type phospholipase A2 inhibitor family. As to quaternary structure, homotrimer; non-covalently linked. In terms of tissue distribution, expressed by the liver.

Its subcellular location is the secreted. Functionally, this phospholipase A2 inhibitor binds directly phospholipase A2 in the presence or absence of calcium. This is Phospholipase A2 inhibitor B1 from Crotalus durissus terrificus (South American rattlesnake).